The primary structure comprises 611 residues: Leukotriene A-4 hydrolase (611 aa).

Residue Lys-73 is modified to N6-acetyllysine. Residues 135–137 (QCQ) and 267–272 (PYGGME) contribute to the a peptide site. His-296 contacts Zn(2+). The Proton acceptor role is filled by Glu-297. The Zn(2+) site is built by His-300 and Glu-319. The residue at position 337 (Lys-337) is an N6-acetyllysine. The Proton donor role is filled by Tyr-384. Phosphoserine is present on Ser-416. A peptide is bound at residue 564-566 (RMK). Lys-573 is modified (N6-acetyllysine).

The protein belongs to the peptidase M1 family. Zn(2+) serves as cofactor. Phosphorylation at Ser-416 inhibits enzymatic activity.

It localises to the cytoplasm. It carries out the reaction leukotriene A4 + H2O = leukotriene B4. Its pathway is lipid metabolism; leukotriene B4 biosynthesis. Its activity is regulated as follows. Inhibited by bestatin. Subject to suicide inhibition by leukotriene A4. In terms of biological role, epoxide hydrolase that catalyzes the final step in the biosynthesis of the pro-inflammatory mediator leukotriene B4. Also has aminopeptidase activity. This is Leukotriene A-4 hydrolase (LTA4H) from Chinchilla lanigera (Long-tailed chinchilla).